The sequence spans 252 residues: CD99 antigen-like protein 2 (252 aa).

The first 23 residues, 1–23, serve as a signal peptide directing secretion; that stretch reads MEKTLWTWTLLAVFSLLVVKGMS. The interval 30 to 170 is disordered; it reads DALGDDDDDE…DLDPADDNNY (141 aa). Residues 57 to 68 are compositionally biased toward low complexity; the sequence is AAVKPTLKPVKP. The segment covering 96-120 has biased composition (basic and acidic residues); sequence NDIKGKGKDSGKGDKEVGGGSRDDG. Residues 178–198 traverse the membrane as a helical segment; that stretch reads TIAGIVSAVAMALVGAVSSYI.

This sequence belongs to the CD99 family.

The protein resides in the cell membrane. It is found in the cell junction. Functionally, may function as a homophilic adhesion molecule. This chain is CD99 antigen-like protein 2 (cd99l2), found in Danio rerio (Zebrafish).